Here is an 87-residue protein sequence, read N- to C-terminus: Cytochrome c oxidase assembly factor 4 homolog, mitochondrial (87 aa).

A compositionally biased stretch (polar residues) spans 1–13 (MSTSVPQGHTWTQ). Positions 1–25 (MSTSVPQGHTWTQRVKKDDEEEDPL) are disordered. The CHCH domain maps to 31–72 (RSGCAASHFAVQECMAQHQDWRQCQPQVQAFKDCMSEQQARR). 2 short sequence motifs (cx9C motif) span residues 34 to 44 (CAASHFAVQEC) and 54 to 64 (CQPQVQAFKDC). 2 cysteine pairs are disulfide-bonded: C34/C64 and C44/C54. Residues 68 to 87 (QQARRQEELQRRQEQAGAHH) form a disordered region. Basic and acidic residues predominate over residues 69–81 (QARRQEELQRRQE).

This sequence belongs to the COA4 family.

It localises to the mitochondrion. Its function is as follows. Putative COX assembly factor. In Homo sapiens (Human), this protein is Cytochrome c oxidase assembly factor 4 homolog, mitochondrial (COA4).